The following is a 68-amino-acid chain: Glucagon-1 (68 aa).

This sequence belongs to the glucagon family.

It localises to the secreted. Promotes hydrolysis of glycogen and lipids, and raises the blood sugar level. This chain is Glucagon-1 (gcg), found in Oncorhynchus kisutch (Coho salmon).